The chain runs to 189 residues: Glucose-6-phosphate isomerase (189 aa).

Residues H88, H90, E97, and H136 each coordinate Fe cation.

Belongs to the archaeal-type GPI family. Homodimer. The cofactor is Fe cation.

Its subcellular location is the cytoplasm. The enzyme catalyses alpha-D-glucose 6-phosphate = beta-D-fructose 6-phosphate. The protein operates within carbohydrate degradation; glycolysis; D-glyceraldehyde 3-phosphate and glycerone phosphate from D-glucose: step 2/4. The protein is Glucose-6-phosphate isomerase (pgiA) of Pyrococcus horikoshii (strain ATCC 700860 / DSM 12428 / JCM 9974 / NBRC 100139 / OT-3).